Consider the following 331-residue polypeptide: UAP56-interacting factor (331 aa).

Positions 16–34 (APDKVDMSLDDIIRLNKKE) match the UAP56-binding motif motif. 3 disordered regions span residues 30–51 (LNKKEQQARRPSPGNRRPLQKG), 63–99 (RARGQTQRGGGVPRGAITRAGVGRGRKIPPPVGRRRG), and 158–193 (GQRRPYRQTDIQRGLNSTRPFQQRRRPLPPVQTQRE). Over residues 166-175 (TDIQRGLNST) the composition is skewed to polar residues.

It belongs to the UIF family.

Its subcellular location is the nucleus. The protein resides in the nucleoplasm. The protein localises to the nucleus speckle. Its function is as follows. Required for mRNA export from the nucleus to the cytoplasm. Acts as an adapter that uses the ddx39b/uap56-nfx1 pathway to ensure efficient mRNA export and delivering to the nuclear pore. In Salmo salar (Atlantic salmon), this protein is UAP56-interacting factor (fyttd1).